The primary structure comprises 487 residues: Adenylosuccinate synthetase, chloroplastic (487 aa).

The transit peptide at 1–46 directs the protein to the chloroplast; that stretch reads MSLSTVNHAAAAAAAAGSGKSFSAAAPAAPSVRLPRTRAPAAAAVS. GTP-binding positions include 74-80 and 102-104; these read GDEGKGK and GHT. The active-site Proton acceptor is the aspartate 75. Mg(2+) contacts are provided by aspartate 75 and glycine 102. IMP contacts are provided by residues 75–78, 100–103, threonine 192, arginine 206, glutamine 286, threonine 301, and arginine 365; these read DEGK and NAGH. Histidine 103 acts as the Proton donor in catalysis. Position 361-367 (361-367) interacts with substrate; it reads TTTGRPR. GTP contacts are provided by residues arginine 367, 393-395, and 476-478; these read KLD and GVG.

This sequence belongs to the adenylosuccinate synthetase family. In terms of assembly, homodimer. Mg(2+) serves as cofactor.

It is found in the plastid. The protein localises to the chloroplast. The catalysed reaction is IMP + L-aspartate + GTP = N(6)-(1,2-dicarboxyethyl)-AMP + GDP + phosphate + 2 H(+). It functions in the pathway purine metabolism; AMP biosynthesis via de novo pathway; AMP from IMP: step 1/2. Its function is as follows. Plays an important role in the de novo pathway and in the salvage pathway of purine nucleotide biosynthesis. Catalyzes the first committed step in the biosynthesis of AMP from IMP. This chain is Adenylosuccinate synthetase, chloroplastic, found in Oryza sativa subsp. indica (Rice).